The following is a 441-amino-acid chain: Histidine--tRNA ligase (441 aa).

The protein belongs to the class-II aminoacyl-tRNA synthetase family. Homodimer.

The protein localises to the cytoplasm. The catalysed reaction is tRNA(His) + L-histidine + ATP = L-histidyl-tRNA(His) + AMP + diphosphate + H(+). This is Histidine--tRNA ligase from Koribacter versatilis (strain Ellin345).